A 234-amino-acid chain; its full sequence is MKKTFFIADLHLSENRPHLTELFVQFMQTQALQAEKLYILGDLFDFWIGDDEQSALIETVQQQILQLSQKGIPCYFIHGNRDFLVGRHFANSCGMELLPTYQIVNLYGKKVLICHGDTLCTDDLAYQQYRKKVQQKWLQWLFLHLPLKVRLKIAEKIRQKSKTDKTHKSIEIMDVNKDFVEQIMQQFQVNILIHGHTHKQNIHQNPPHFTRIVLGDWGATASVLEVSANGFQFI.

Asp-9, His-11, Asp-42, Asn-80, and His-115 together coordinate Mn(2+). 80-81 lines the substrate pocket; the sequence is NR. Residues Asp-123, Ser-161, Lys-165, Lys-168, and His-196 each coordinate substrate. 2 residues coordinate Mn(2+): His-196 and His-198.

This sequence belongs to the LpxH family. It depends on Mn(2+) as a cofactor.

The protein localises to the cell inner membrane. The enzyme catalyses UDP-2-N,3-O-bis[(3R)-3-hydroxytetradecanoyl]-alpha-D-glucosamine + H2O = 2-N,3-O-bis[(3R)-3-hydroxytetradecanoyl]-alpha-D-glucosaminyl 1-phosphate + UMP + 2 H(+). It functions in the pathway glycolipid biosynthesis; lipid IV(A) biosynthesis; lipid IV(A) from (3R)-3-hydroxytetradecanoyl-[acyl-carrier-protein] and UDP-N-acetyl-alpha-D-glucosamine: step 4/6. Its function is as follows. Hydrolyzes the pyrophosphate bond of UDP-2,3-diacylglucosamine to yield 2,3-diacylglucosamine 1-phosphate (lipid X) and UMP by catalyzing the attack of water at the alpha-P atom. Involved in the biosynthesis of lipid A, a phosphorylated glycolipid that anchors the lipopolysaccharide to the outer membrane of the cell. The chain is UDP-2,3-diacylglucosamine hydrolase from Histophilus somni (strain 129Pt) (Haemophilus somnus).